Consider the following 235-residue polypeptide: Carboxy-S-adenosyl-L-methionine synthase (235 aa).

S-adenosyl-L-methionine is bound by residues Y35, 60–62 (GCS), 83–84 (DN), N124, and R191.

This sequence belongs to the class I-like SAM-binding methyltransferase superfamily. Cx-SAM synthase family. As to quaternary structure, homodimer.

It carries out the reaction prephenate + S-adenosyl-L-methionine = carboxy-S-adenosyl-L-methionine + 3-phenylpyruvate + H2O. Functionally, catalyzes the conversion of S-adenosyl-L-methionine (SAM) to carboxy-S-adenosyl-L-methionine (Cx-SAM). In Campylobacter jejuni subsp. jejuni serotype O:6 (strain 81116 / NCTC 11828), this protein is Carboxy-S-adenosyl-L-methionine synthase.